We begin with the raw amino-acid sequence, 496 residues long: Myotilin (496 aa).

Positions 1–37 (MFNYERPKHFIQPQNPCGSRLQPPGPEVSGFPSQTKQ) are disordered. An Omega-N-methylarginine modification is found at arginine 20. Residues 78-149 (PNPGQKVTAT…PTPKTPDHEI (72 aa)) are necessary for interaction with ACTN1. Polar residues-rich tracts occupy residues 202-213 (NSDVQDSPQHNP) and 221-233 (PTSQVRSRSSSRA). Residues 202–239 (NSDVQDSPQHNPEQARLHVPTSQVRSRSSSRAEANDQD) form a disordered region. Residues 213–491 (PEQARLHVPT…QRLAAQSGLY (279 aa)) form a necessary for interaction with FLNC region. Residues 213–496 (PEQARLHVPT…QSGLYESEEL (284 aa)) form a necessary for interaction with ACTA1 region. Ig-like C2-type domains follow at residues 248 to 333 (PRFI…ATFT) and 347 to 439 (PMFI…LDVT).

It belongs to the myotilin/palladin family. In terms of assembly, homodimer. Interacts with ACTA1, ACTN1, FLNA, FLNB, FLNC, and MYOZ2. Interacts with the C-terminal region of MYOZ1. As to expression, expressed in skeletal muscle (at protein level).

It is found in the cell membrane. It localises to the sarcolemma. Its subcellular location is the cytoplasm. The protein resides in the cytoskeleton. The protein localises to the myofibril. It is found in the sarcomere. It localises to the z line. Its function is as follows. Component of a complex of multiple actin cross-linking proteins. Involved in the control of myofibril assembly and stability at the Z lines in muscle cells. The protein is Myotilin (Myot) of Mus musculus (Mouse).